The primary structure comprises 210 residues: UPF0301 protein M446_6268 (210 aa).

This sequence belongs to the UPF0301 (AlgH) family.

The protein is UPF0301 protein M446_6268 of Methylobacterium sp. (strain 4-46).